A 611-amino-acid polypeptide reads, in one-letter code: Alpha-1,2-mannosyltransferase ALG9 (611 aa).

Residues 1-10 (MASRGARQRL) show a composition bias toward basic residues. The disordered stretch occupies residues 1-23 (MASRGARQRLKGSGASSGDTAPA). Residues 1-135 (MASRGARQRL…FHARILQTNK (135 aa)) lie on the Lumenal side of the membrane. N-linked (GlcNAc...) asparagine glycosylation is present at Asn-77. A helical membrane pass occupies residues 136 to 156 (ILVFYFLRCLLAFVSCICELY). Over 157–171 (FYKAVCKKFGLHVSR) the chain is Cytoplasmic. Residues 172-192 (MMLAFLVLSTGMFCSSSAFLP) traverse the membrane as a helical segment. Residues 193 to 213 (SSFCMYTTLIAMTGWYMDKTS) lie on the Lumenal side of the membrane. Residues 214 to 234 (IAVLGVAAGAILGWPFSAALG) traverse the membrane as a helical segment. The Cytoplasmic segment spans residues 235–249 (LPIAFDLLVMKHRWK). Residues 250-270 (SFFHWSLMALILFLVPVVVID) form a helical membrane-spanning segment. Over 271-304 (SYYYGKLVIAPLNIVLYNVFTPHGPDLYGTEPWY) the chain is Lumenal. The chain crosses the membrane as a helical span at residues 305-325 (FYLINGFLNFNVAFALALLVL). Residues 326 to 342 (PLTSLMEYLLQRFHVQN) are Cytoplasmic-facing. A helical transmembrane segment spans residues 343–363 (LGHPYWLTLAPMYIWFIIFFI). Over 364–370 (QPHKEER) the chain is Lumenal. A helical transmembrane segment spans residues 371–391 (FLFPVYPLICLCGAVALSALQ). The Cytoplasmic portion of the chain corresponds to 392 to 405 (KCYHFVFQRYRLEH). A helical transmembrane segment spans residues 406–426 (YTVTSNWLALGTVFLFGLLSF). Residues 427-611 (SRSVALFRGY…AKQIRKKSGG (185 aa)) are Lumenal-facing. The N-linked (GlcNAc...) asparagine glycan is linked to Asn-593.

This sequence belongs to the glycosyltransferase 22 family. As to expression, ubiquitously expressed; with highest levels in heart, liver and pancreas.

The protein resides in the endoplasmic reticulum membrane. It carries out the reaction an alpha-D-Man-(1-&gt;2)-alpha-D-Man-(1-&gt;2)-alpha-D-Man-(1-&gt;3)-[alpha-D-Man-(1-&gt;3)-alpha-D-Man-(1-&gt;6)]-beta-D-Man-(1-&gt;4)-beta-D-GlcNAc-(1-&gt;4)-alpha-D-GlcNAc-diphospho-di-trans,poly-cis-dolichol + a di-trans,poly-cis-dolichyl beta-D-mannosyl phosphate = an alpha-D-Man-(1-&gt;2)-alpha-D-Man-(1-&gt;2)-alpha-D-Man-(1-&gt;3)-[alpha-D-Man-(1-&gt;2)-alpha-D-Man-(1-&gt;3)-alpha-D-Man-(1-&gt;6)]-beta-D-Man-(1-&gt;4)-beta-D-GlcNAc-(1-&gt;4)-alpha-D-GlcNAc-diphospho-di-trans,poly-cis-dolichol + a di-trans,poly-cis-dolichyl phosphate + H(+). It catalyses the reaction an alpha-D-Man-(1-&gt;2)-alpha-D-Man-(1-&gt;2)-alpha-D-Man-(1-&gt;3)-[alpha-D-Man-(1-&gt;2)-alpha-D-Man-(1-&gt;3)-[alpha-D-Man-(1-&gt;6)]-alpha-D-Man-(1-&gt;6)]-beta-D-Man-(1-&gt;4)-beta-D-GlcNAc-(1-&gt;4)-alpha-D-GlcNAc-diphospho-di-trans,poly-cis-dolichol + a di-trans,poly-cis-dolichyl beta-D-mannosyl phosphate = an alpha-D-Man-(1-&gt;2)-alpha-D-Man-(1-&gt;2)-alpha-D-Man-(1-&gt;3)-[alpha-D-Man-(1-&gt;2)-alpha-D-Man-(1-&gt;3)-[alpha-D-Man-(1-&gt;2)-alpha-D-Man-(1-&gt;6)]-alpha-D-Man-(1-&gt;6)]-beta-D-Man-(1-&gt;4)-beta-D-GlcNAc-(1-&gt;4)-alpha-D-GlcNAc-diphospho-di-trans,poly-cis-dolichol + a di-trans,poly-cis-dolichyl phosphate + H(+). It participates in protein modification; protein glycosylation. Functionally, mannosyltransferase that operates in the biosynthetic pathway of dolichol-linked oligosaccharides, the glycan precursors employed in protein asparagine (N)-glycosylation. The assembly of dolichol-linked oligosaccharides begins on the cytosolic side of the endoplasmic reticulum membrane and finishes in its lumen. The sequential addition of sugars to dolichol pyrophosphate produces dolichol-linked oligosaccharides containing fourteen sugars, including two GlcNAcs, nine mannoses and three glucoses. Once assembled, the oligosaccharide is transferred from the lipid to nascent proteins by oligosaccharyltransferases. In the lumen of the endoplasmic reticulum, catalyzes the addition of the seventh and ninth alpha-1,2-linked mannose residues to Man(6)GlcNAc(2)-PP-dolichol and Man(8)GlcNAc(2)-PP-dolichol respectively. The polypeptide is Alpha-1,2-mannosyltransferase ALG9 (Homo sapiens (Human)).